The following is a 292-amino-acid chain: Ventral anterior homeobox 2 (292 aa).

The span at 1 to 36 shows a compositional bias: basic and acidic residues; the sequence is MGDGGAERDRGPKRREEPGGRSGRHGEHRGAEDLRA. The tract at residues 1 to 74 is disordered; it reads MGDGGAERDR…DGQQALGETD (74 aa). The homeobox DNA-binding region spans 102-161; that stretch reads PKRTRTSFTAEQLYRLEMEFQRCQYVVGRERTELARQLNLSETQVKVWFQNRRTKQKKDQ. Residues 207–242 are disordered; the sequence is LPGLPASHRGTSLVDPRNSSPRLNPMPSASASSPLP.

Belongs to the EMX homeobox family. Expressed in the developing and mature retina.

Its subcellular location is the nucleus. Functionally, transcription factor that may function in dorsoventral specification of the forebrain. Regulates the expression of Wnt signaling antagonists including the expression of a truncated TCF7L2 isoform that cannot bind CTNNB1 and acts therefore as a potent dominant-negative Wnt antagonist. Plays a crucial role in eye development and, in particular, in the specification of the ventral optic vesicle. May be a regulator of axial polarization in the retina. The chain is Ventral anterior homeobox 2 (Vax2) from Mus musculus (Mouse).